Here is a 101-residue protein sequence, read N- to C-terminus: NADH-quinone oxidoreductase subunit K (101 aa).

3 helical membrane-spanning segments follow: residues 4–24 (LSHY…GIFL), 30–50 (IVLL…FIAF), and 61–81 (VFVF…LAIL).

Belongs to the complex I subunit 4L family. As to quaternary structure, NDH-1 is composed of 14 different subunits. Subunits NuoA, H, J, K, L, M, N constitute the membrane sector of the complex.

The protein resides in the cell inner membrane. It carries out the reaction a quinone + NADH + 5 H(+)(in) = a quinol + NAD(+) + 4 H(+)(out). Its function is as follows. NDH-1 shuttles electrons from NADH, via FMN and iron-sulfur (Fe-S) centers, to quinones in the respiratory chain. The immediate electron acceptor for the enzyme in this species is believed to be ubiquinone. Couples the redox reaction to proton translocation (for every two electrons transferred, four hydrogen ions are translocated across the cytoplasmic membrane), and thus conserves the redox energy in a proton gradient. The protein is NADH-quinone oxidoreductase subunit K of Azoarcus sp. (strain BH72).